A 146-amino-acid polypeptide reads, in one-letter code: Lysozyme C (146 aa).

Positions 1 to 16 (SGKYISWEDSCSYLQL) are cleaved as a signal peptide. Positions 17–146 (QKYERCELAK…LSQWTQGCKL (130 aa)) constitute a C-type lysozyme domain. Intrachain disulfides connect Cys22–Cys144, Cys46–Cys132, Cys81–Cys97, and Cys93–Cys111. Catalysis depends on residues Glu51 and Asp69.

It belongs to the glycosyl hydrolase 22 family. As to expression, expressed by the skin glands.

It is found in the secreted. The enzyme catalyses Hydrolysis of (1-&gt;4)-beta-linkages between N-acetylmuramic acid and N-acetyl-D-glucosamine residues in a peptidoglycan and between N-acetyl-D-glucosamine residues in chitodextrins.. Its function is as follows. Lysozymes have primarily a bacteriolytic function; those in tissues and body fluids are associated with the monocyte-macrophage system and enhance the activity of immunoagents. Has antibacterial activity against the Gram-positive bacterium S.aureus and against the Gram-negative bacterium E.coli with a MIC of 1 uM and 8 uM respectively. No antifungal activity against C.albicans. The protein is Lysozyme C of Bufo gargarizans andrewsi (Andrew's toad).